The following is a 335-amino-acid chain: MWFSVNKNKKAAIWATGSYLPEKVLSNADLEKMVDTSDEWIVTRTGIKERRIAGPQEYTSLMGAIAAEKAIANAGLSKDQIDCIIFSTAAPDYIFPSSGALAQAHLGIEDVPTFDCQAACTGYLYGLSVAKAYVESGTYNHVLLIAADKLSSFVDYTDRNTCVLFGDGGAACVIGESRPGSLEINRLSLGADGKLGELLSLPAGGSRCPASKETLQSGKHFIAMEGKEVFKHAVRRMETAAKHSIALAGIQEEDIDWFVPHQANERIIDALAKRFEIDESRVFKSVHKYGNTAASSVGIALDELVHTESIKLDDYLLLVAFGGGLSWGAVVLKQV.

Active-site residues include Cys-120 and His-261. Positions 262-266 (QANER) are ACP-binding. Asn-291 is an active-site residue.

The protein belongs to the thiolase-like superfamily. FabH family. As to quaternary structure, homodimer.

The protein localises to the cytoplasm. It carries out the reaction malonyl-[ACP] + acetyl-CoA + H(+) = 3-oxobutanoyl-[ACP] + CO2 + CoA. It participates in lipid metabolism; fatty acid biosynthesis. Catalyzes the condensation reaction of fatty acid synthesis by the addition to an acyl acceptor of two carbons from malonyl-ACP. Catalyzes the first condensation reaction which initiates fatty acid synthesis and may therefore play a role in governing the total rate of fatty acid production. Possesses both acetoacetyl-ACP synthase and acetyl transacylase activities. Its substrate specificity determines the biosynthesis of branched-chain and/or straight-chain of fatty acids. The protein is Beta-ketoacyl-[acyl-carrier-protein] synthase III of Chlamydia pneumoniae (Chlamydophila pneumoniae).